The chain runs to 135 residues: Small ribosomal subunit protein uS17 (135 aa).

A disordered region spans residues 1-59 (MAEAKTGAKAAPRVAKAAKAAPKKAAPNDAEAIGAANAANVKGPKHTPRTPKPRGRRKT). Positions 8–42 (AKAAPRVAKAAKAAPKKAAPNDAEAIGAANAANVK) are enriched in low complexity. Residues 43–59 (GPKHTPRTPKPRGRRKT) show a composition bias toward basic residues.

Belongs to the universal ribosomal protein uS17 family. In terms of assembly, part of the 30S ribosomal subunit.

Its function is as follows. One of the primary rRNA binding proteins, it binds specifically to the 5'-end of 16S ribosomal RNA. This is Small ribosomal subunit protein uS17 from Mycobacterium bovis (strain ATCC BAA-935 / AF2122/97).